Reading from the N-terminus, the 176-residue chain is Large ribosomal subunit protein eL20A (176 aa).

The protein belongs to the eukaryotic ribosomal protein eL20 family. As to quaternary structure, component of the large ribosomal subunit (LSU). Mature yeast ribosomes consist of a small (40S) and a large (60S) subunit. The 40S small subunit contains 1 molecule of ribosomal RNA (18S rRNA) and at least 33 different proteins. The large 60S subunit contains 3 rRNA molecules (25S, 5.8S and 5S rRNA) and at least 46 different proteins. eL20 forms multiple interactions with RNA and proteins in the central protuberance, connecting components of core functional centers that are located far apart.

The protein resides in the cytoplasm. Functionally, component of the ribosome, a large ribonucleoprotein complex responsible for the synthesis of proteins in the cell. The small ribosomal subunit (SSU) binds messenger RNAs (mRNAs) and translates the encoded message by selecting cognate aminoacyl-transfer RNA (tRNA) molecules. The large subunit (LSU) contains the ribosomal catalytic site termed the peptidyl transferase center (PTC), which catalyzes the formation of peptide bonds, thereby polymerizing the amino acids delivered by tRNAs into a polypeptide chain. The nascent polypeptides leave the ribosome through a tunnel in the LSU and interact with protein factors that function in enzymatic processing, targeting, and the membrane insertion of nascent chains at the exit of the ribosomal tunnel. This chain is Large ribosomal subunit protein eL20A (rpl2001), found in Schizosaccharomyces pombe (strain 972 / ATCC 24843) (Fission yeast).